A 570-amino-acid polypeptide reads, in one-letter code: BRICHOS domain-containing protein C09F5.1 (570 aa).

Residues 1–288 (MVVEQIEVIE…YTPELLRSLC (288 aa)) lie on the Cytoplasmic side of the membrane. Polar residues-rich tracts occupy residues 93–107 (SGATNSSFLNTSGDS) and 228–246 (TSTLNSRRFPPQSQTSLVS). 2 disordered regions span residues 93-116 (SGATNSSFLNTSGDSRVSYPGADR) and 218-248 (SSWDGDEKKMTSTLNSRRFPPQSQTSLVSRE). The helical transmembrane segment at 289–309 (CILLLLLLLLFLMFIIFNAIF) threads the bilayer. The Extracellular segment spans residues 310–570 (NRYAVSEFLL…RKSINNATLV (261 aa)). The region spanning 369-461 (TAVDFNTGYV…IDDCEGAQWY (93 aa)) is the BRICHOS domain. A disulfide bond links Cys395 and Cys455.

Its subcellular location is the membrane. The polypeptide is BRICHOS domain-containing protein C09F5.1 (Caenorhabditis elegans).